The following is a 215-amino-acid chain: Cytochrome b6 (215 aa).

The helical transmembrane segment at 32–52 (IFYCFGGIVFTCFLVQVATGF) threads the bilayer. Heme c is bound at residue Cys35. Positions 86 and 100 each coordinate heme b. The next 3 helical transmembrane spans lie at 90–110 (ASMM…TGGF), 116–136 (LTWV…VTGY), and 186–206 (AHTF…FLMI). Residues His187 and His202 each coordinate heme b.

The protein belongs to the cytochrome b family. PetB subfamily. The 4 large subunits of the cytochrome b6-f complex are cytochrome b6, subunit IV (17 kDa polypeptide, PetD), cytochrome f and the Rieske protein, while the 4 small subunits are PetG, PetL, PetM and PetN. The complex functions as a dimer. It depends on heme b as a cofactor. Heme c is required as a cofactor.

Its subcellular location is the plastid. It localises to the chloroplast thylakoid membrane. In terms of biological role, component of the cytochrome b6-f complex, which mediates electron transfer between photosystem II (PSII) and photosystem I (PSI), cyclic electron flow around PSI, and state transitions. This chain is Cytochrome b6, found in Skeletonema costatum (Marine centric diatom).